The sequence spans 250 residues: Cell division protein ZapD (250 aa).

It belongs to the ZapD family. In terms of assembly, interacts with FtsZ.

The protein localises to the cytoplasm. In terms of biological role, cell division factor that enhances FtsZ-ring assembly. Directly interacts with FtsZ and promotes bundling of FtsZ protofilaments, with a reduction in FtsZ GTPase activity. The polypeptide is Cell division protein ZapD (Pectobacterium atrosepticum (strain SCRI 1043 / ATCC BAA-672) (Erwinia carotovora subsp. atroseptica)).